The sequence spans 317 residues: GTP cyclohydrolase MptA (317 aa).

This sequence belongs to the GTP cyclohydrolase IV family. Homodimer. Fe(2+) serves as cofactor.

The catalysed reaction is GTP + H2O = 7,8-dihydroneopterin 2',3'-cyclic phosphate + formate + diphosphate + H(+). It participates in cofactor biosynthesis; 5,6,7,8-tetrahydromethanopterin biosynthesis. Functionally, converts GTP to 7,8-dihydro-D-neopterin 2',3'-cyclic phosphate, the first intermediate in the biosynthesis of coenzyme methanopterin. This Methanococcoides burtonii (strain DSM 6242 / NBRC 107633 / OCM 468 / ACE-M) protein is GTP cyclohydrolase MptA.